Reading from the N-terminus, the 201-residue chain is UPF0301 protein RER_60040 (201 aa).

This sequence belongs to the UPF0301 (AlgH) family.

This Rhodococcus erythropolis (strain PR4 / NBRC 100887) protein is UPF0301 protein RER_60040.